A 151-amino-acid polypeptide reads, in one-letter code: Trivalent organoarsenical cleaving enzyme (151 aa).

The 117-residue stretch at 2–118 (SRVQLALRVP…GGEPWEVYVV (117 aa)) folds into the VOC domain. Q5 contributes to the Fe(2+) binding site. D61 contacts roxarsone (III). H62 serves as a coordination point for Fe(2+). 2 residues coordinate roxarsone (III): C95 and C96. Residue E114 coordinates Fe(2+).

In terms of assembly, monomer. The cofactor is Fe(2+).

It catalyses the reaction methylarsonous acid + AH2 + O2 = arsenite + methanol + A + H(+). The catalysed reaction is roxarsone (III) + AH2 + O2 = 4-hydroxy-3-nitrocyclohexa-2,5-dien-1-one + arsenite + A + H(+). The enzyme catalyses nitarsone (III) + AH2 + O2 = 4-nitrocyclohexa-2,5-dien-1-one + arsenite + A + H(+). It carries out the reaction 4-aminophenylarsonous acid + AH2 + O2 = 4-aminocyclohexa-2,5-dien-1-one + arsenite + A. Nonheme iron-dependent dioxygenase that can break carbon-arsenic bonds, playing a role in the detoxification of environmental organoarsenical compounds. Catalyzes the oxygen-dependent demethylation of highly toxic methylarsonous acid (MAs(III)) to arsenite, which can then be exported out of the cell. Can also cleave the C-As bond in several trivalent aromatic arsenicals, including roxarsone (III), nitarsone (III) and (4-aminophenyl)arsonous acid. Organoarsenical degradation by this enzyme is proposed to have a significant impact on the arsenic biogeocycle that maintains a balance between organic and inorganic species. The sequence is that of Trivalent organoarsenical cleaving enzyme from Thermomonospora curvata (strain ATCC 19995 / DSM 43183 / JCM 3096 / KCTC 9072 / NBRC 15933 / NCIMB 10081 / Henssen B9).